A 77-amino-acid chain; its full sequence is Probable Fe(2+)-trafficking protein (77 aa).

It belongs to the Fe(2+)-trafficking protein family. In terms of assembly, monomer.

Could be a mediator in iron transactions between iron acquisition and iron-requiring processes, such as synthesis and/or repair of Fe-S clusters in biosynthetic enzymes. This Buchnera aphidicola subsp. Acyrthosiphon pisum (strain APS) (Acyrthosiphon pisum symbiotic bacterium) protein is Probable Fe(2+)-trafficking protein.